Consider the following 640-residue polypeptide: WW domain-binding protein 11 (640 aa).

Residues 1–11 (MGRRSTSSTKS) are compositionally biased toward polar residues. The interval 1-37 (MGRRSTSSTKSGKFMNPTDQARKEARKRELKKNKKQR) is disordered. The segment covering 28 to 37 (RELKKNKKQR) has biased composition (basic residues). Residues 75 to 122 (EKVLRDKRKKLRETFERIVRLYERENPETYKELRKLELEYETKRGQLS) adopt a coiled-coil conformation. Disordered regions lie at residues 155–174 (DIPLPGAQPPSILKKSSALG), 187–563 (VPRL…ISAK), and 582–625 (RVRR…LKTK). A compositionally biased stretch (pro residues) spans 194-207 (RKPPGPPPGPPPPQ). Basic and acidic residues predominate over residues 230-240 (DGGRDSDSKSE). Over residues 241–251 (ADEESDSQEDS) the composition is skewed to acidic residues. Positions 252–274 (SAEREDSDRGERDEERERADKHT) are enriched in basic and acidic residues. At S285 the chain carries Phosphoserine. Positions 315–338 (PEEEEEDEEEEYSESEDSEAEDQA) are enriched in acidic residues. The segment covering 356 to 371 (APMAAQQPPSLMQAPP) has biased composition (low complexity). 2 stretches are compositionally biased toward pro residues: residues 372-412 (ITGP…PPGL) and 422-491 (RLLP…PPLN). The short motif at 421–432 (PRLLPPGPPPGR) is the PGR element. Residues 547-558 (GSGGASAQGGGA) show a composition bias toward gly residues. Residues 586 to 599 (DRAGGTGRREEERP) are compositionally biased toward basic and acidic residues. Over residues 603 to 616 (QQTPAHQAPPIAHA) the composition is skewed to low complexity.

Its subcellular location is the cytoplasm. The protein resides in the nucleus. Activates pre-mRNA splicing. This is WW domain-binding protein 11 (wbp11) from Danio rerio (Zebrafish).